The following is a 271-amino-acid chain: Putative F-box protein L165 (271 aa).

The 46-residue stretch at Ile4–Tyr49 folds into the F-box domain. Residues Asn251–Tyr271 form a disordered region. Positions Thr260 to Tyr271 are enriched in basic residues.

In Acanthamoeba polyphaga mimivirus (APMV), this protein is Putative F-box protein L165.